A 192-amino-acid polypeptide reads, in one-letter code: Holliday junction branch migration complex subunit RuvA (192 aa).

The interval 1 to 64 (MIGRLTGILA…EDGHYLYGFL (64 aa)) is domain I. The tract at residues 65–143 (TEAERFAFRQ…DATGVSLHPA (79 aa)) is domain II. A flexible linker region spans residues 144 to 149 (VDDSKQ). The tract at residues 149–192 (QDISNALLALGYNEKEAASAMKQLPADVSTSDGIRAALKLLSKV) is domain III.

It belongs to the RuvA family. Homotetramer. Forms an RuvA(8)-RuvB(12)-Holliday junction (HJ) complex. HJ DNA is sandwiched between 2 RuvA tetramers; dsDNA enters through RuvA and exits via RuvB. An RuvB hexamer assembles on each DNA strand where it exits the tetramer. Each RuvB hexamer is contacted by two RuvA subunits (via domain III) on 2 adjacent RuvB subunits; this complex drives branch migration. In the full resolvosome a probable DNA-RuvA(4)-RuvB(12)-RuvC(2) complex forms which resolves the HJ.

The protein resides in the cytoplasm. Its function is as follows. The RuvA-RuvB-RuvC complex processes Holliday junction (HJ) DNA during genetic recombination and DNA repair, while the RuvA-RuvB complex plays an important role in the rescue of blocked DNA replication forks via replication fork reversal (RFR). RuvA specifically binds to HJ cruciform DNA, conferring on it an open structure. The RuvB hexamer acts as an ATP-dependent pump, pulling dsDNA into and through the RuvAB complex. HJ branch migration allows RuvC to scan DNA until it finds its consensus sequence, where it cleaves and resolves the cruciform DNA. This Dechloromonas aromatica (strain RCB) protein is Holliday junction branch migration complex subunit RuvA.